The sequence spans 258 residues: Casein kinase II subunit beta' (258 aa).

The span at Met1–Thr10 shows a compositional bias: polar residues. The segment at Met1 to Ser29 is disordered.

It belongs to the casein kinase 2 subunit beta family. In terms of assembly, tetramer composed of an alpha subunit, an alpha' subunit, one beta subunit and one beta' subunit. Interacts with FACT subunits POB3 and SPT16. Interaction with YTA7. Post-translationally, phosphorylated by alpha subunit. The N-terminus is blocked.

Its function is as follows. Regulatory subunit of casein kinase II/CK2. As part of the kinase complex regulates the basal catalytic activity of the alpha subunit a constitutively active serine/threonine-protein kinase that phosphorylates a large number of substrates containing acidic residues C-terminal to the phosphorylated serine or threonine. This is Casein kinase II subunit beta' from Saccharomyces cerevisiae (strain ATCC 204508 / S288c) (Baker's yeast).